We begin with the raw amino-acid sequence, 493 residues long: Lysine--tRNA ligase (493 aa).

2 residues coordinate Mg(2+): Glu404 and Glu411.

It belongs to the class-II aminoacyl-tRNA synthetase family. Homodimer. Requires Mg(2+) as cofactor.

The protein localises to the cytoplasm. The catalysed reaction is tRNA(Lys) + L-lysine + ATP = L-lysyl-tRNA(Lys) + AMP + diphosphate. The sequence is that of Lysine--tRNA ligase from Oceanobacillus iheyensis (strain DSM 14371 / CIP 107618 / JCM 11309 / KCTC 3954 / HTE831).